Reading from the N-terminus, the 623-residue chain is Actin-related protein 8 (623 aa).

A compositionally biased stretch (basic and acidic residues) spans 1–24 (MTQTDRDAENGRDREKDREKEQQR). The disordered stretch occupies residues 1 to 29 (MTQTDRDAENGRDREKDREKEQQRGVKRP). 283–286 (DVGD) is a binding site for ATP. The segment covering 428–438 (TQSKQDQSSKA) has biased composition (low complexity). The tract at residues 428 to 458 (TQSKQDQSSKASADRKSFPKPSSFEGESSVC) is disordered.

It belongs to the actin family. ARP8 subfamily. As to quaternary structure, component of the chromatin remodeling INO80 complex; specifically part of a complex module associated with the DBINO domain of INO80. Exists as monomers and dimers, but the dimer is most probably the biologically relevant form required for stable interactions with histones that exploits the twofold symmetry of the nucleosome core.

The protein resides in the nucleus. Its subcellular location is the chromosome. Functionally, plays an important role in the functional organization of mitotic chromosomes. Exhibits low basal ATPase activity, and unable to polymerize. Its function is as follows. Proposed core component of the chromatin remodeling INO80 complex which is involved in transcriptional regulation, DNA replication and probably DNA repair. Required for the recruitment of INO80 (and probably the INO80 complex) to sites of DNA damage Strongly prefer nucleosomes and H3-H4 tetramers over H2A-H2B dimers, suggesting it may act as a nucleosome recognition module within the complex. This chain is Actin-related protein 8 (actr8), found in Danio rerio (Zebrafish).